A 201-amino-acid polypeptide reads, in one-letter code: Ras-related protein Rab-1B (201 aa).

Methionine 1 is modified (N-acetylmethionine). GTP-binding residues include serine 17, glycine 18, valine 19, glycine 20, lysine 21, serine 22, cysteine 23, tyrosine 33, threonine 34, glutamate 35, serine 36, serine 39, and threonine 40. A Mg(2+)-binding site is contributed by serine 22. Positions aspartate 30–phenylalanine 45 match the Switch 1 motif. Mg(2+) contacts are provided by threonine 40 and aspartate 63. The segment at threonine 64–glycine 83 is switch 2 region; required for interaction with REP1/CHM. Residues alanine 65 to glycine 80 carry the Switch 2 motif. GTP-binding residues include glycine 66, asparagine 121, lysine 122, aspartate 124, serine 151, alanine 152, and lysine 153. Residues glycine 174–cysteine 201 are disordered. S-geranylgeranyl cysteine attachment occurs at residues cysteine 200 and cysteine 201. Cysteine 201 is modified (cysteine methyl ester).

It belongs to the small GTPase superfamily. Rab family. As to quaternary structure, interacts with MICAL1 and MICAL2. Interacts (in GTP-bound form) with MICALCL, MICAL1 and MILCAL3. Interacts with GDI1; the interaction requires the GDP-bound state. Interacts with CHM/REP1; the interaction requires the GDP-bound form and is necessary for prenylation by GGTase II. Interacts with RabGAP TBC1D20. Interacts (in GDP-bound form) with lipid phosphatase MTMR6 (via GRAM domain); the interaction regulates MTMR6 recruitment to the endoplasmic reticulum-Golgi intermediate compartment. Interacts (in GDP-bound form) with lipid phosphatase MTMR7. It depends on Mg(2+) as a cofactor. In terms of processing, prenylated; by GGTase II, only after interaction of the substrate with Rab escort protein 1 (REP1).

It localises to the cytoplasm. It is found in the membrane. Its subcellular location is the preautophagosomal structure membrane. The protein localises to the perinuclear region. The catalysed reaction is GTP + H2O = GDP + phosphate + H(+). Its activity is regulated as follows. Regulated by guanine nucleotide exchange factors (GEFs) which promote the exchange of bound GDP for free GTP. Regulated by GTPase activating proteins (GAPs) including TBC1D20 which increases the GTP hydrolysis activity. Inhibited by GDP dissociation inhibitors (GDIs). Its function is as follows. The small GTPases Rab are key regulators of intracellular membrane trafficking, from the formation of transport vesicles to their fusion with membranes. Rabs cycle between an inactive GDP-bound form and an active GTP-bound form that is able to recruit to membranes different set of downstream effectors directly responsible for vesicle formation, movement, tethering and fusion. Plays a role in the initial events of the autophagic vacuole development which take place at specialized regions of the endoplasmic reticulum. Regulates vesicular transport between the endoplasmic reticulum and successive Golgi compartments. Required to modulate the compacted morphology of the Golgi. Promotes the recruitment of lipid phosphatase MTMR6 to the endoplasmic reticulum-Golgi intermediate compartment. This Macaca fascicularis (Crab-eating macaque) protein is Ras-related protein Rab-1B (RAB1B).